A 340-amino-acid polypeptide reads, in one-letter code: Mitochondrial carrier protein CoAc1 (340 aa).

6 helical membrane passes run 22 to 42 (ALDL…AGAF), 85 to 105 (FYKG…LHYM), 130 to 147 (LLAG…TYPL), 199 to 219 (GVGP…YIYE), 237 to 257 (LSCG…LDVV), and 297 to 317 (FAGL…GFTT). Solcar repeat units lie at residues 27 to 113 (PVYA…YRCW), 124 to 224 (TGPV…LKSQ), and 231 to 324 (DSVI…MKAL).

This sequence belongs to the mitochondrial carrier (TC 2.A.29) family. Expressed throughout the plant.

It localises to the mitochondrion inner membrane. Its function is as follows. Required for the accumulation of coenzyme A in the mitochondrial matrix. The sequence is that of Mitochondrial carrier protein CoAc1 from Zea mays (Maize).